The following is a 192-amino-acid chain: SPbeta prophage-derived uncharacterized protein YokK (192 aa).

This Bacillus subtilis (strain 168) protein is SPbeta prophage-derived uncharacterized protein YokK (yokK).